We begin with the raw amino-acid sequence, 60 residues long: MKVFFAVLITLFICSMIIGIHGVGINVKCKHSGQCLKPCKDAGMRFGKCINGKCDCTPKG.

A signal peptide spans 1–22; that stretch reads MKVFFAVLITLFICSMIIGIHG. 3 cysteine pairs are disulfide-bonded: cysteine 29–cysteine 49, cysteine 35–cysteine 54, and cysteine 39–cysteine 56. Lysine 59 carries the lysine amide modification.

It belongs to the short scorpion toxin superfamily. Potassium channel inhibitor family. Alpha-KTx 03 subfamily. In terms of tissue distribution, expressed by the venom gland.

Its subcellular location is the secreted. Functionally, blocks voltage-gated potassium channels. At 2 uM, blocks rat Kv1.1/KCNA1 and Kv1.3/KCNA3, has a strong effect on rat Kv1.2/KCNA2 and Kv1.6/KCNA6 as well as a moderate effect on Shaker IR. The polypeptide is Potassium channel toxin alpha-KTx 3.6 (Olivierus martensii (Manchurian scorpion)).